Consider the following 396-residue polypeptide: Bone morphogenetic protein 2 (396 aa).

The first 23 residues, 1–23 (MVAGTRCLLALLLPQVLLGGAAG), serve as a signal peptide directing secretion. Residues 24-282 (LVPELGRRKF…GHPLHKREKR (259 aa)) constitute a propeptide, cleaved by PCSK5. The tract at residues 84–121 (RRHSGQPGSPAPDHRLERAASRANTVRSFHHEESLEEL) is disordered. The residue at position 87 (Ser-87) is a Phosphoserine. Residues Asn-135, Asn-163, Asn-164, and Asn-200 are each glycosylated (N-linked (GlcNAc...) asparagine). The disordered stretch occupies residues 271 to 293 (GKGHPLHKREKRQAKHKQRKRLK). Basic residues predominate over residues 274 to 293 (HPLHKREKRQAKHKQRKRLK). 3 cysteine pairs are disulfide-bonded: Cys-296-Cys-361, Cys-325-Cys-393, and Cys-329-Cys-395. Asn-338 is a glycosylation site (N-linked (GlcNAc...) (high mannose) asparagine).

It belongs to the TGF-beta family. Homodimer; disulfide-linked. Interacts with SOSTDC1. Interacts with GREM2, RGMA, RGMB and RGMC. Interacts with ASPN. Interacts with MAFP5. Interacts with FBN1 (via N-terminal domain) and FBN2. Interacts with type I receptor BMPR1A. Interacts with type II receptor BMPR2. Interacts with SCUBE3. Interacts with TNFAIP6 (primarily via Link domain); this interaction is inhibited by hyaluronan. Interacts with ERFE. Interacts with BMPR1A/ALK3; the interaction may induce HAMP expression. Forms heterodimers with BMP6 in vitro; the heterodimer then binds to its receptor BMPR1A /ALK3 and may induce HAMP expression. Interacts with TGFBR3. In terms of tissue distribution, particularly abundant in lung, spleen and colon and in low but significant levels in heart, brain, placenta, liver, skeletal muscle, kidney, pancreas, prostate, ovary and small intestine.

It localises to the secreted. Functionally, growth factor of the TGF-beta superfamily that plays essential roles in many developmental processes, including cardiogenesis, neurogenesis, and osteogenesis. Induces cartilage and bone formation. Initiates the canonical BMP signaling cascade by associating with type I receptor BMPR1A and type II receptor BMPR2. Once all three components are bound together in a complex at the cell surface, BMPR2 phosphorylates and activates BMPR1A. In turn, BMPR1A propagates signal by phosphorylating SMAD1/5/8 that travel to the nucleus and act as activators and repressors of transcription of target genes. Also acts to promote expression of HAMP, via the interaction with its receptor BMPR1A/ALK3. Can also signal through non-canonical pathways such as ERK/MAP kinase signaling cascade that regulates osteoblast differentiation. Also stimulates the differentiation of myoblasts into osteoblasts via the EIF2AK3-EIF2A-ATF4 pathway by stimulating EIF2A phosphorylation which leads to increased expression of ATF4 which plays a central role in osteoblast differentiation. Acts as a positive regulator of odontoblast differentiation during mesenchymal tooth germ formation, expression is repressed during the bell stage by MSX1-mediated inhibition of CTNNB1 signaling. This chain is Bone morphogenetic protein 2 (BMP2), found in Homo sapiens (Human).